A 613-amino-acid chain; its full sequence is Serine protease FAM111A (613 aa).

Positions 1-72 (MSCKKRKSQI…TRQDQTPPLN (72 aa)) are disordered. A Glycyl lysine isopeptide (Lys-Gly) (interchain with G-Cter in SUMO2) cross-link involves residue lysine 19. Serine 25 carries the post-translational modification Phosphoserine. Lysine 29 participates in a covalent cross-link: Glycyl lysine isopeptide (Lys-Gly) (interchain with G-Cter in SUMO2). Over residues 40–56 (VDSKKMPRDITNTRDQR) the composition is skewed to basic and acidic residues. Lysine 62 is covalently cross-linked (Glycyl lysine isopeptide (Lys-Gly) (interchain with G-Cter in SUMO2)). Catalysis depends on charge relay system residues histidine 383, aspartate 437, and serine 543.

Belongs to the FAM111 family. As to quaternary structure, interacts (via PIP-box) with PCNA; this interaction is direct. Post-translationally, autocatalytically cleaved; autocatalytic cleavage takes place in trans.

Its subcellular location is the nucleus. It is found in the chromosome. It localises to the cytoplasm. In terms of biological role, single-stranded DNA-binding serine protease that mediates the proteolytic cleavage of covalent DNA-protein cross-links (DPCs) during DNA synthesis, thereby playing a key role in maintaining genomic integrity. DPCs are highly toxic DNA lesions that interfere with essential chromatin transactions, such as replication and transcription, and which are induced by reactive agents, such as UV light or formaldehyde. Protects replication fork from stalling by removing DPCs, such as covalently trapped topoisomerase 1 (TOP1) adducts on DNA lesion, or poly(ADP-ribose) polymerase 1 (PARP1)-DNA complexes trapped by PARP inhibitors. Required for PCNA loading on replication sites. Promotes S-phase entry and DNA synthesis. This chain is Serine protease FAM111A, found in Mus musculus (Mouse).